A 37-amino-acid chain; its full sequence is uncharacterized protein (37 aa).

A helical membrane pass occupies residues Phe16–Gly36.

It belongs to the SscA family.

It is found in the membrane. This is an uncharacterized protein from Bacillus subtilis (strain 168).